The primary structure comprises 553 residues: Putative transport protein YidE (553 aa).

The next 5 helical transmembrane spans lie at 4-24 (IALTVSILALVAVVGLFIGNV), 28-48 (GVGLGIGGVLFGGIIVGHFVS), 65-85 (FGLILFVYTIGIQVGPGFFAS), 95-115 (LFAVLIVIIGGLVTAILHKLF), and 158-178 (MSYAMAYPFGICGILFTMWML). RCK C-terminal domains lie at 191–276 (QQHE…VIGQ) and 279–361 (DTSL…VLGN). 6 consecutive transmembrane segments (helical) span residues 371-391 (MLPVFIGIGLGVLLGSIPVFV), 393-413 (GFPAALKLGLAGGPLIMALIL), 439-459 (IVLFLSVVGLKSGGDFIHTLV), 464-484 (LSWIGYGALITAVPLITVGIL), 493-513 (YLTMCGMLAGSMTDPPALAFA), and 533-553 (LVMFLRIITPQLLAVLFWSIG).

This sequence belongs to the AAE transporter (TC 2.A.81) family. YidE subfamily.

The protein localises to the cell membrane. The sequence is that of Putative transport protein YidE from Escherichia coli O6:K15:H31 (strain 536 / UPEC).